We begin with the raw amino-acid sequence, 346 residues long: tRNA N6-adenosine threonylcarbamoyltransferase (346 aa).

Residues histidine 117, histidine 121, and tyrosine 138 each coordinate a divalent metal cation. Residues 138-142, aspartate 170, glycine 185, and asparagine 277 contribute to the substrate site; that span reads YVSGG. Aspartate 305 serves as a coordination point for a divalent metal cation.

It belongs to the KAE1 / TsaD family. In terms of assembly, component of the EKC/KEOPS complex composed of at least SPAP27G11.07c/BUD32, cgi121, gon7, pgp2 and SPAC4H3.13/PCC1; the whole complex dimerizes. It depends on a divalent metal cation as a cofactor.

The protein localises to the cytoplasm. It is found in the nucleus. It catalyses the reaction L-threonylcarbamoyladenylate + adenosine(37) in tRNA = N(6)-L-threonylcarbamoyladenosine(37) in tRNA + AMP + H(+). Component of the EKC/KEOPS complex that is required for the formation of a threonylcarbamoyl group on adenosine at position 37 (t(6)A37) in tRNAs that read codons beginning with adenine. The complex is probably involved in the transfer of the threonylcarbamoyl moiety of threonylcarbamoyl-AMP (TC-AMP) to the N6 group of A37. Pgp2 likely plays a direct catalytic role in this reaction, but requires other protein(s) of the complex to fulfill this activity. The EKC/KEOPS complex also promotes both telomere uncapping and telomere elongation. The complex is required for efficient recruitment of transcriptional coactivators. The protein is tRNA N6-adenosine threonylcarbamoyltransferase (pgp2) of Schizosaccharomyces pombe (strain 972 / ATCC 24843) (Fission yeast).